Here is a 434-residue protein sequence, read N- to C-terminus: Glutamyl-tRNA reductase 2 (434 aa).

Substrate-binding positions include threonine 57–arginine 60, serine 113, aspartate 118–glutamate 120, and glutamine 124. Cysteine 58 serves as the catalytic Nucleophile. Glycine 193–glycine 198 contacts NADP(+).

Belongs to the glutamyl-tRNA reductase family. As to quaternary structure, homodimer.

It carries out the reaction (S)-4-amino-5-oxopentanoate + tRNA(Glu) + NADP(+) = L-glutamyl-tRNA(Glu) + NADPH + H(+). It functions in the pathway porphyrin-containing compound metabolism; protoporphyrin-IX biosynthesis; 5-aminolevulinate from L-glutamyl-tRNA(Glu): step 1/2. In terms of biological role, catalyzes the NADPH-dependent reduction of glutamyl-tRNA(Glu) to glutamate 1-semialdehyde (GSA). The polypeptide is Glutamyl-tRNA reductase 2 (Flavobacterium johnsoniae (strain ATCC 17061 / DSM 2064 / JCM 8514 / BCRC 14874 / CCUG 350202 / NBRC 14942 / NCIMB 11054 / UW101) (Cytophaga johnsonae)).